Here is a 462-residue protein sequence, read N- to C-terminus: Cytokine-like nuclear factor N-PAC (462 aa).

In terms of domain architecture, PWWP spans 8 to 66 (IGDLVWGKLGRYPPWPGKVVSPPKDLKKPRGKKCFFVKFFGTEDHAWIKVEQLKPYHPH). The segment covering 91-111 (KKAKGKDQSHSDDKSKSDKGR) has biased composition (basic and acidic residues). The segment at 91 to 139 (KKAKGKDQSHSDDKSKSDKGRKAAKPMKIIEEDDEDAFKGGSSDKPASS) is disordered. Positions 169–462 (GSITPTDKRI…MSAVYRAYIH (294 aa)) are dehydrogenase domain. NAD(+) is bound by residues 179 to 193 (GFLG…VVSN), T270, and K414.

It belongs to the HIBADH-related family. NP60 subfamily. As to quaternary structure, homotetramere. Binds to mononucleosomes.

Its subcellular location is the nucleus. The protein resides in the chromosome. In terms of biological role, may have oxidoreductase activity. Regulates p38 MAP kinase activity by mediating stress activation of mapk14 and specifically regulating mapk14 signaling. Its function is as follows. Cytokine-like nuclear factor with chromatin gene reader activity involved in chromatin modification and regulation of gene expression. Acts as a nucleosome-destabilizing factor that is recruited to genes during transcriptional activation. Recognizes and binds histone H3 without a preference for specific epigenetic markers and also binds DNA. Interacts with KDM1B and promotes its histone demethylase activity by facilitating the capture of H3 tails, they form a multifunctional enzyme complex that modifies transcribed chromatin and facilitates Pol II transcription through nucleosomes. In Danio rerio (Zebrafish), this protein is Cytokine-like nuclear factor N-PAC (glyr1).